The following is a 128-amino-acid chain: Cystatin-1 (128 aa).

The signal sequence occupies residues methionine 1 to alanine 17. A Cystatin domain is found at glycine 20–asparagine 128. Intrachain disulfides connect cysteine 84-cysteine 96 and cysteine 107-cysteine 127.

It belongs to the cystatin family. Mainly expressed in gut.

It localises to the secreted. In terms of biological role, inhibitor of cysteine proteinases. Strongly inhibits mammalian cathepsin B and H, and moderately inhibits mammalian cathepsin C. Also inhibits endogenous cathepsin B-like but not cathepsin C-like proteinases. May have a protective role against undesired digestion of a stored blood meal by endogenous peptidases. This Ornithodoros moubata (Soft tick) protein is Cystatin-1.